The chain runs to 164 residues: MSSESKLILIGIISSPYGIRGQVAIKSFTDPASNILNYELKDYRKNIIKIHSAKILSKKIICNIDQIVTRTAAEQLTRTKLYIYKHELPQLPDSEYYVANLNGIKVKNLEGEIIGKINNICNYNAGDIIEVVYNDGKKIMYPFTNEIFPQITEDFVVIVPPEFI.

One can recognise a PRC barrel domain in the interval 92-164 (PDSEYYVANL…FVVIVPPEFI (73 aa)).

The protein belongs to the RimM family. As to quaternary structure, binds ribosomal protein uS19.

The protein localises to the cytoplasm. An accessory protein needed during the final step in the assembly of 30S ribosomal subunit, possibly for assembly of the head region. Essential for efficient processing of 16S rRNA. May be needed both before and after RbfA during the maturation of 16S rRNA. It has affinity for free ribosomal 30S subunits but not for 70S ribosomes. The sequence is that of Ribosome maturation factor RimM from Orientia tsutsugamushi (strain Ikeda) (Rickettsia tsutsugamushi).